The chain runs to 509 residues: Protein WHAT'S THIS FACTOR 1 homolog, chloroplastic (509 aa).

A chloroplast-targeting transit peptide spans 1–56 (MDAKLLLLPFPSPPATLHHHPPPPKSLFLGASLPLLHPPPPLRLLRPGAPRRLAVV). The 329-residue stretch at 65 to 393 (KEIPFDNVIQ…LKEKMRALVA (329 aa)) folds into the PORR domain. Disordered regions lie at residues 402-431 (VPATSEEADRTNGAAQMLSEGSDVEDDEDE) and 444-509 (SGGK…RERW). The segment covering 461 to 474 (ENDDSPPDFEDDDG) has biased composition (acidic residues).

It is found in the plastid. Its subcellular location is the chloroplast. Its function is as follows. RNA-binding protein involved in group II intron splicing. Binds specific group II introns and promotes their splicing. Functions in the context of a heterodimer with the ribonuclease III domain-containing protein RNC1. This Oryza sativa subsp. japonica (Rice) protein is Protein WHAT'S THIS FACTOR 1 homolog, chloroplastic.